Consider the following 255-residue polypeptide: uncharacterized protein (255 aa).

This is an uncharacterized protein from Paracoccus denitrificans.